Consider the following 207-residue polypeptide: Cilia- and flagella-associated protein 418 (207 aa).

The tract at residues 1 to 75 (MAEDLDELLD…LINEILEEPN (75 aa)) is required for interaction with FAM161A. The tract at residues 26-52 (MVEQPKGCGGGTHSSDRNQAKAKETLR) is disordered. The span at 39–52 (SSDRNQAKAKETLR) shows a compositional bias: basic and acidic residues.

As to quaternary structure, interacts (via N-terminus) with FAM161A (via central region); the interaction is direct. In terms of tissue distribution, widely expressed, with highest levels in heart and brain. Also expressed in the retina (at protein level).

The protein resides in the cytoplasm. Its subcellular location is the photoreceptor inner segment. May be involved in photoreceptor outer segment disk morphogenesis. The chain is Cilia- and flagella-associated protein 418 from Homo sapiens (Human).